A 341-amino-acid polypeptide reads, in one-letter code: Protein pelota homolog (341 aa).

It belongs to the eukaryotic release factor 1 family. Pelota subfamily. As to quaternary structure, monomer. It depends on a divalent metal cation as a cofactor.

It is found in the cytoplasm. Functionally, may function in recognizing stalled ribosomes, interact with stem-loop structures in stalled mRNA molecules, and effect endonucleolytic cleavage of the mRNA. May play a role in the release non-functional ribosomes and degradation of damaged mRNAs. Has endoribonuclease activity. The protein is Protein pelota homolog of Methanoregula boonei (strain DSM 21154 / JCM 14090 / 6A8).